A 335-amino-acid chain; its full sequence is Protein-glutamate methylesterase/protein-glutamine glutaminase 3 (335 aa).

In terms of domain architecture, Response regulatory spans arginine 2 to leucine 119. The residue at position 53 (aspartate 53) is a 4-aspartylphosphate. The region spanning proline 144–aspartate 335 is the CheB-type methylesterase domain. Active-site residues include serine 159, histidine 186, and aspartate 279.

This sequence belongs to the CheB family. In terms of processing, phosphorylated by CheA. Phosphorylation of the N-terminal regulatory domain activates the methylesterase activity.

Its subcellular location is the cytoplasm. The catalysed reaction is [protein]-L-glutamate 5-O-methyl ester + H2O = L-glutamyl-[protein] + methanol + H(+). It catalyses the reaction L-glutaminyl-[protein] + H2O = L-glutamyl-[protein] + NH4(+). Involved in chemotaxis. Part of a chemotaxis signal transduction system that modulates chemotaxis in response to various stimuli. Catalyzes the demethylation of specific methylglutamate residues introduced into the chemoreceptors (methyl-accepting chemotaxis proteins or MCP) by CheR. Also mediates the irreversible deamidation of specific glutamine residues to glutamic acid. In Pseudomonas aeruginosa (strain ATCC 15692 / DSM 22644 / CIP 104116 / JCM 14847 / LMG 12228 / 1C / PRS 101 / PAO1), this protein is Protein-glutamate methylesterase/protein-glutamine glutaminase 3.